A 161-amino-acid chain; its full sequence is Suppressor of kinetochore protein 1 (161 aa).

Residues 102-161 (VLASNYLDIKPLLDTGCKTVANMIRGKSPEDIRKTFNIPNDFTPEEEEQIRKENEWAEDR) are interaction with the F-box domain of F-box proteins.

The protein belongs to the SKP1 family. Essential component of the E3 ubiquitin ligase Skp1-Cullin-1-F-box (SCF) complex. Interacts with cul1, fbh1, mcs2, pip1, pof1, pof2, pof3, pof4, pof5, pof6, pof7, pof8, pof9, pof10, pof11, pof12, pof13, pof14, pop1, pop2 and tfb3. Forms a complex with pof6 and sip1. Component of the RAVE complex composed of rav1, rav2 and skp1.

The protein resides in the cytoplasm. The protein localises to the nucleus. Its function is as follows. Required for cig2 degradation in the G2 and M phases of the cell cycle. Together with pof6, essential for septum processing and cell separation. Involved in mitotic progression, essential for the execution of anaphase B; required for coordinated structural alterations of mitotic spindles and segregation of nuclear membrane structures at anaphase. Involved in the DNA damage checkpoint pathway and maintenance of genome integrity. Component of the RAVE complex which is required for stable assembly of the vacuolar ATPase complex V-ATPase. The protein is Suppressor of kinetochore protein 1 of Schizosaccharomyces pombe (strain 972 / ATCC 24843) (Fission yeast).